Consider the following 706-residue polypeptide: SPX domain-containing membrane protein Os09g0521800 (706 aa).

In terms of domain architecture, SPX spans 2-145 (VNFSNKLTKD…GYKFTDYYVR (144 aa)). Transmembrane regions (helical) follow at residues 251 to 271 (MSLV…YIVV), 281 to 301 (LGAA…AQVF), 318 to 338 (LLFS…AFDL), 340 to 359 (SLTI…ARAV), 378 to 398 (AAFV…AGLL), and 414 to 434 (LPGW…WILF). The segment at 475–498 (SEQDEEDDNGDEEHNETLSSSTTT) is disordered. Positions 476-488 (EQDEEDDNGDEEH) are enriched in acidic residues. 5 helical membrane passes run 520–540 (LLIY…SSVV), 554–574 (VFLA…GTYI), 583–603 (ILVA…KLTV), 611–631 (VCSA…NLSL), and 678–698 (LLNA…AATL).

This sequence belongs to the major facilitator superfamily.

It localises to the membrane. This is SPX domain-containing membrane protein Os09g0521800 from Oryza sativa subsp. japonica (Rice).